A 258-amino-acid chain; its full sequence is Hydroxyacylglutathione hydrolase (258 aa).

The Zn(2+) site is built by histidine 52, histidine 54, aspartate 56, histidine 57, histidine 109, aspartate 126, and histidine 164.

It belongs to the metallo-beta-lactamase superfamily. Glyoxalase II family. Monomer. Zn(2+) serves as cofactor.

The catalysed reaction is an S-(2-hydroxyacyl)glutathione + H2O = a 2-hydroxy carboxylate + glutathione + H(+). It functions in the pathway secondary metabolite metabolism; methylglyoxal degradation; (R)-lactate from methylglyoxal: step 2/2. Thiolesterase that catalyzes the hydrolysis of S-D-lactoyl-glutathione to form glutathione and D-lactic acid. The protein is Hydroxyacylglutathione hydrolase of Xylella fastidiosa (strain M23).